A 231-amino-acid polypeptide reads, in one-letter code: NADH-ubiquinone oxidoreductase chain 4 (231 aa).

Transmembrane regions (helical) follow at residues 1-21 (PIAG…YGII), 34-54 (VFLP…LTCL), 61-80 (SLIA…AIII), 84-106 (WGLS…LFCL), 128-148 (ILPM…ATPP), 156-176 (LLII…LGLS), and 211-231 (LLMI…ELVI).

The protein belongs to the complex I subunit 4 family.

The protein localises to the mitochondrion membrane. It carries out the reaction a ubiquinone + NADH + 5 H(+)(in) = a ubiquinol + NAD(+) + 4 H(+)(out). Functionally, core subunit of the mitochondrial membrane respiratory chain NADH dehydrogenase (Complex I) that is believed to belong to the minimal assembly required for catalysis. Complex I functions in the transfer of electrons from NADH to the respiratory chain. The immediate electron acceptor for the enzyme is believed to be ubiquinone. This is NADH-ubiquinone oxidoreductase chain 4 (MT-ND4) from Tropidolaemus wagleri (Wagler's pit viper).